The chain runs to 81 residues: Sulfur carrier protein TusA (81 aa).

The Cysteine persulfide intermediate role is filled by Cys-19.

The protein belongs to the sulfur carrier protein TusA family.

It localises to the cytoplasm. In terms of biological role, sulfur carrier protein which probably makes part of a sulfur-relay system. This is Sulfur carrier protein TusA from Shewanella denitrificans (strain OS217 / ATCC BAA-1090 / DSM 15013).